The following is a 1481-amino-acid chain: Cystic fibrosis transmembrane conductance regulator (1481 aa).

Topologically, residues 1–77 (MQRSPLEKAS…KLINALRRCF (77 aa)) are cytoplasmic. Residues 78-98 (FWRFMFYGIILYLGEVTKAVQ) traverse the membrane as a helical segment. The ABC transmembrane type-1 1 domain maps to 81 to 365 (FMFYGIILYL…WAVQTWYDSL (285 aa)). At 99 to 122 (PLLLGRIIASYDPDNKAERSIAIY) the chain is on the extracellular side. A helical transmembrane segment spans residues 123–146 (LGIGLCLLFIVRTLLLHPAIFGLH). Topologically, residues 147-195 (HIGMQMRIAMFSLIYKKTLKLSSRVLDKISIGQLVSLLSNNLNKFDEGL) are cytoplasmic. The helical transmembrane segment at 196–216 (ALAHFVWIAPLQVTLLMGLLW) threads the bilayer. The Extracellular segment spans residues 217–222 (ELLQAF). Residues 223–243 (TFCGLAFLVVLAFLQAGLGKM) form a helical membrane-spanning segment. Over 244–298 (MMKYRDQRAGKINERLVITSEIIENIQSVKAYCWEEAMEKIIENLRQTELKLTRK) the chain is Cytoplasmic. A helical membrane pass occupies residues 299 to 319 (AAYVRYLNSSAFFFSGFFVVF). Residues 320–339 (LSVLPYALLKGIILRKIFTT) lie on the Extracellular side of the membrane. A helical membrane pass occupies residues 340-358 (ISFCIVLRMAVTRQFPWAV). Over 359–858 (QTWYDSLGAI…YLRYITVHKS (500 aa)) the chain is Cytoplasmic. ATP contacts are provided by residues tryptophan 401, 457–464 (GSTGAGKT), and glutamine 492. The 223-residue stretch at 423 to 645 (NGDNNLFFSN…RPDFSSKLMG (223 aa)) folds into the ABC transporter 1 domain. Residue cysteine 523 is the site of S-palmitoyl cysteine attachment. Phosphoserine occurs at positions 548 and 659. Residues 653-831 (TAERRNSIIT…EEINEEDLRD (179 aa)) form a disordered R region region. Serine 669 is modified (phosphoserine; by PKA). Phosphoserine is present on serine 685. Lysine 687 is covalently cross-linked (Glycyl lysine isopeptide (Lys-Gly) (interchain with G-Cter in ubiquitin)). Phosphoserine is present on residues serine 699 and serine 711. Threonine 716 carries the phosphothreonine modification. Residues serine 736, serine 767, serine 790, serine 795, and serine 813 each carry the phosphoserine modification. A helical membrane pass occupies residues 859-879 (LMFVLIWCLVVFLAEVAASLV). One can recognise an ABC transmembrane type-1 2 domain in the interval 859-1155 (LMFVLIWCLV…AVNSSIDVDS (297 aa)). The Extracellular portion of the chain corresponds to 880-918 (VLCLFPKILFQDKGNSTKSANNSYAVIITSTSSYYIFYI). N-linked (GlcNAc...) asparagine glycans are attached at residues asparagine 894 and asparagine 900. The discontinuously helical transmembrane segment at 919–939 (YVGVADTLLALGLFRGLPLVH) threads the bilayer. Residues 940–990 (TLITVSKTLHHKMLQSVLQAPMSTLNTLKTGGILNRFSKDIAVLDDLLPLT) lie on the Cytoplasmic side of the membrane. Residues 991–1011 (IFDFVQLLLIVIGAVVVVSVL) form a helical membrane-spanning segment. At 1012–1013 (QP) the chain is on the extracellular side. The helical transmembrane segment at 1014–1034 (YIFLATVPVIAAFILLRAYFL) threads the bilayer. Topologically, residues 1035-1095 (HTSQQLKQLE…TANWFLYLST (61 aa)) are cytoplasmic. Residues 1096-1116 (LRWFQMRIEMIFVIFFIAVTF) traverse the membrane as a helical segment. Over 1117 to 1130 (ISILTTGEGEGRVG) the chain is Extracellular. A helical transmembrane segment spans residues 1131-1151 (IILTLAMNIMGTLQWAVNSSI). Topologically, residues 1152–1481 (DVDSLMRSVS…TEEEVQETKI (330 aa)) are cytoplasmic. One can recognise an ABC transporter 2 domain in the interval 1211-1444 (MTVKDLTAKY…KSLFRQAISP (234 aa)). Residues tyrosine 1220 and 1245 to 1252 (GRTGSGKS) each bind ATP. An interaction with GORASP2 region spans residues 1387 to 1481 (RTLKQAFADC…TEEEVQETKI (95 aa)). A lipid anchor (S-palmitoyl cysteine) is attached at cysteine 1396. The interval 1452–1481 (PQRNSSRQKSRSNIAALKEETEEEVQETKI) is disordered. Residues 1453-1464 (QRNSSRQKSRSN) show a composition bias toward low complexity. Serine 1457 bears the Phosphoserine mark. Acidic residues predominate over residues 1471–1481 (ETEEEVQETKI). The PDZ-binding signature appears at 1479–1481 (TKI).

This sequence belongs to the ABC transporter superfamily. ABCC family. CFTR transporter (TC 3.A.1.202) subfamily. Monomer; does not require oligomerization for channel activity. May form oligomers in the membrane. Interacts with SLC26A3, SLC26A6 and NHERF1. Interacts with SHANK2. Interacts with MYO6. Interacts (via C-terminus) with GOPC (via PDZ domain); this promotes CFTR internalization and thereby decreases channel activity. Interacts with SLC4A7 through NHERF1. Found in a complex with MYO5B and RAB11A. Interacts with ANO1. Interacts with SLC26A8. Interacts with AHCYL1; the interaction increases CFTR activity. Interacts with CSE1L. The core-glycosylated form interacts with GORASP2 (via PDZ GRASP-type 1 domain) in respone to ER stress. Interacts with MARCHF2; the interaction leads to CFTR ubiqtuitination and degradation. Interacts with ADGRG2. Post-translationally, N-glycosylated. Phosphorylated; cAMP treatment promotes phosphorylation and activates the channel. Dephosphorylation decreases the ATPase activity (in vitro). Phosphorylation at PKA sites activates the channel. Phosphorylation at PKC sites enhances the response to phosphorylation by PKA. Phosphorylated by AMPK; this inhibits channel activity. In terms of processing, ubiquitinated, leading to its degradation in the lysosome. Deubiquitination by USP10 in early endosomes enhances its endocytic recycling to the cell membrane. Ubiquitinated by RNF185 during ER stress. Ubiquitinated by MARCHF2.

The protein resides in the apical cell membrane. It is found in the early endosome membrane. The protein localises to the cell membrane. Its subcellular location is the recycling endosome membrane. It localises to the endoplasmic reticulum membrane. The protein resides in the nucleus. The catalysed reaction is ATP + H2O + closed Cl(-) channel = ADP + phosphate + open Cl(-) channel.. It carries out the reaction chloride(in) = chloride(out). It catalyses the reaction hydrogencarbonate(in) = hydrogencarbonate(out). The enzyme catalyses ATP + H2O = ADP + phosphate + H(+). Functionally, epithelial ion channel that plays an important role in the regulation of epithelial ion and water transport and fluid homeostasis. Mediates the transport of chloride ions across the cell membrane. Possesses an intrinsic ATPase activity and utilizes ATP to gate its channel; the passive flow of anions through the channel is gated by cycles of ATP binding and hydrolysis by the ATP-binding domains. The ion channel is also permeable to HCO(3)(-); selectivity depends on the extracellular chloride concentration. Exerts its function also by modulating the activity of other ion channels and transporters. Contributes to the regulation of the pH and the ion content of the epithelial fluid layer. Modulates the activity of the epithelial sodium channel (ENaC) complex, in part by regulating the cell surface expression of the ENaC complex. May regulate bicarbonate secretion and salvage in epithelial cells by regulating the transporter SLC4A7. Can inhibit the chloride channel activity of ANO1. Plays a role in the chloride and bicarbonate homeostasis during sperm epididymal maturation and capacitation. This chain is Cystic fibrosis transmembrane conductance regulator, found in Muntiacus reevesi (Reeves' muntjac).